A 745-amino-acid chain; its full sequence is Myeloperoxidase (745 aa).

An N-terminal signal peptide occupies residues 1-48; that stretch reads MGVPFFSSLRCMVDLGPCWAGGLTAEMKLLLALAGLLAILATPQPSEG. An N-linked (GlcNAc...) asparagine glycan is attached at Asn139. Residues Cys167 and Cys180 are joined by a disulfide bond. Asp260 is a heme b binding site. The active-site Proton acceptor is the His261. Asp262 is a Ca(2+) binding site. 2 cysteine pairs are disulfide-bonded: Cys281/Cys291 and Cys285/Cys309. Cysteine sulfenic acid (-SOH) is present on Cys316. An N-linked (GlcNAc...) asparagine glycan is attached at Asn323. Thr334, Phe336, Asp338, and Ser340 together coordinate Ca(2+). Residues Asn355 and Asn391 are each glycosylated (N-linked (GlcNAc...) asparagine). Cys387 and Cys398 are oxidised to a cystine. Heme b is bound by residues Glu408 and Met409. The N-linked (GlcNAc...) asparagine glycan is linked to Asn483. Position 502 (His502) interacts with heme b. 2 disulfide bridges follow: Cys606-Cys663 and Cys704-Cys730. Asn729 is a glycosylation site (N-linked (GlcNAc...) asparagine).

This sequence belongs to the peroxidase family. XPO subfamily. In terms of assembly, homodimer; disulfide-linked. Each monomer consists of a light and a heavy chain. Found in a complex with CP and LTF; interacts directly with CP, which protects CP antioxidant properties by MPO. The cofactor is Ca(2+). Heme b serves as cofactor.

It localises to the lysosome. The enzyme catalyses chloride + H2O2 + H(+) = hypochlorous acid + H2O. Part of the host defense system of polymorphonuclear leukocytes. It is responsible for microbicidal activity against a wide range of organisms. In the stimulated PMN, MPO catalyzes the production of hypohalous acids, primarily hypochlorous acid in physiologic situations, and other toxic intermediates that greatly enhance PMN microbicidal activity. Mediates the proteolytic cleavage of alpha-1-microglobulin to form t-alpha-1-microglobulin, which potently inhibits oxidation of low-density lipoprotein particles and limits vascular damage. The chain is Myeloperoxidase from Homo sapiens (Human).